The sequence spans 1616 residues: Protein P200 (1616 aa).

6 disordered regions span residues 1 to 41 (MPKT…DKVE), 878 to 909 (HFQP…QAEF), 931 to 975 (QQLE…LDQN), 1004 to 1083 (DNVE…EPVD), 1100 to 1132 (FDKN…TVGE), and 1159 to 1433 (ISEP…SEEE). Residues 891 to 1389 (EAKFDSPVEI…QEAKFDSPVE (499 aa)) form a 2 X 26 AA repeats region. A compositionally biased stretch (low complexity) spans 938–952 (EETVVTPTEVTAFEP). Composition is skewed to basic and acidic residues over residues 1012-1029 (QPKE…KELQ) and 1059-1081 (VFEK…KSEP). 2 tandem repeats follow at residues 1161–1186 (EPQV…SPVE) and 1205–1236 (EIQP…SPVE). Polar residues-rich tracts occupy residues 1200 to 1227 (VQTQ…QTPQ) and 1242 to 1251 (EFSSEPTQQH). A 2 X 32 AA repeats region spans residues 1205 to 1389 (EIQPVESQPE…QEAKFDSPVE (185 aa)). Residues 1256 to 1270 (ASFDEPNYDFDEPNY) show a composition bias toward acidic residues. Polar residues predominate over residues 1276-1285 (SYDSDLQPSE). Positions 1288-1302 (YDVDEPNYDFDEPNY) are enriched in acidic residues. The span at 1309–1323 (SEPQFEPQVEQQPGE) shows a compositional bias: low complexity. 2 repeat units span residues 1310–1339 (EPQF…SPVE) and 1358–1389 (EIQP…SPVE). Polar residues predominate over residues 1353–1380 (VQTQPEIQPVESQPEATFDTVQPEQTPQ). Low complexity predominate over residues 1392–1406 (QEPQVSSEPEVVVQP). Acidic residues predominate over residues 1416 to 1433 (VLEEPQADEIQPEASEEE).

Could be an accessory structural component in cytadherence. The protein is Protein P200 of Mycoplasma genitalium (strain ATCC 33530 / DSM 19775 / NCTC 10195 / G37) (Mycoplasmoides genitalium).